Reading from the N-terminus, the 333-residue chain is Ferredoxin--NADP reductase (333 aa).

Residues Asp32, Gln40, Tyr45, Ala85, Phe119, Asp285, and Thr326 each coordinate FAD.

The protein belongs to the ferredoxin--NADP reductase type 2 family. Homodimer. It depends on FAD as a cofactor.

It catalyses the reaction 2 reduced [2Fe-2S]-[ferredoxin] + NADP(+) + H(+) = 2 oxidized [2Fe-2S]-[ferredoxin] + NADPH. This is Ferredoxin--NADP reductase from Neorickettsia sennetsu (strain ATCC VR-367 / Miyayama) (Ehrlichia sennetsu).